A 72-amino-acid chain; its full sequence is MEKPTSSTNGEKRKSPCDSNNKNDEMQETPNRDLVLEPSLKKMKTSEYSTVLVLCYRKTKKIHSNQLENDQS.

The disordered stretch occupies residues 1–40; sequence MEKPTSSTNGEKRKSPCDSNNKNDEMQETPNRDLVLEPSL. Over residues 10 to 35 the composition is skewed to basic and acidic residues; it reads GEKRKSPCDSNNKNDEMQETPNRDLV.

This sequence belongs to the SPAN-X family.

The chain is Sperm protein associated with the nucleus on the X chromosome N1 (SPANXN1) from Gorilla gorilla gorilla (Western lowland gorilla).